Reading from the N-terminus, the 463-residue chain is NADH dehydrogenase [ubiquinone] iron-sulfur protein 2, mitochondrial (463 aa).

A mitochondrion-targeting transit peptide spans 1–33; the sequence is MAALRALGGLRGVAAQVLRPGAGVRLPIQPSRG. An N6-acetyllysine modification is found at K62. Symmetric dimethylarginine is present on R118. [4Fe-4S] cluster contacts are provided by C326, C332, and C347.

It belongs to the complex I 49 kDa subunit family. In terms of assembly, core subunit of respiratory chain NADH dehydrogenase (Complex I) which is composed of 45 different subunits. Component of the iron-sulfur (IP) fragment of the enzyme. Interacts with NDUFAF3. Interacts with NDUFAF7. Interacts with CERS2. [4Fe-4S] cluster serves as cofactor. In terms of processing, dimethylation at Arg-118 by NDUFAF7 takes place after NDUFS2 assembles into the complex I, leading to stabilize the early intermediate complex.

The protein localises to the mitochondrion inner membrane. It catalyses the reaction a ubiquinone + NADH + 5 H(+)(in) = a ubiquinol + NAD(+) + 4 H(+)(out). Functionally, core subunit of the mitochondrial membrane respiratory chain NADH dehydrogenase (Complex I) which catalyzes electron transfer from NADH through the respiratory chain, using ubiquinone as an electron acceptor. Essential for the catalytic activity and assembly of complex I. Redox-sensitive, critical component of the oxygen-sensing pathway in the pulmonary vasculature which plays a key role in acute pulmonary oxygen-sensing and hypoxic pulmonary vasoconstriction. Plays an important role in carotid body sensing of hypoxia. Essential for glia-like neural stem and progenitor cell proliferation, differentiation and subsequent oligodendrocyte or neuronal maturation. The protein is NADH dehydrogenase [ubiquinone] iron-sulfur protein 2, mitochondrial (NDUFS2) of Pongo pygmaeus (Bornean orangutan).